The chain runs to 86 residues: Kappa-theraphotoxin-Cg1a 1 (86 aa).

A signal peptide spans 1–21 (MKVSVLITLAVLGVMFVWASA). The propeptide occupies 22-50 (AELEERGSDQRDSPAWLKSMERIFQSGER). Intrachain disulfides connect Cys-52/Cys-66, Cys-59/Cys-71, and Cys-65/Cys-78. An involved in active face region spans residues 55-56 (MF). Phe-84 is modified (phenylalanine amide).

The protein belongs to the neurotoxin 10 (Hwtx-1) family. 28 (Jztx-11) subfamily. In terms of tissue distribution, expressed by the venom gland.

Its subcellular location is the secreted. In terms of biological role, this toxin acts as a voltage-dependent gating-modifier. It inhibits the sodium conductance (IC(50)=124 nM) and slows the fast inactivation (EC(50)=1180 nM) of Nav1.5/SCN5A. It significantly shifts the activation to more depolarized voltages and decreases the deactivation of Nav1.5 currents upon extreme depolarization, but only slightly affects voltage-dependence of steady-state inactivation. In addition, this toxin causes an approximately five-fold decrease in the rate of recovery from inactivation and an approximately 1.9-fold reduction in the closed-state inactivation rate. This toxin integrates the functions of site 3 toxins (alpha-scorpion toxins) with site 4 toxins (beta-scorpion and spider toxins) by targeting multiple sites on Nav1.5. Also shows inhibition of voltage-gated potassium channels (5 uM completely inhibits Kv2.1/KCNB1, whereas 5 uM moderately inhibits Kv4.2/KCND2 Kv4.1/KCND1 channels). In Chilobrachys guangxiensis (Chinese earth tiger tarantula), this protein is Kappa-theraphotoxin-Cg1a 1.